The chain runs to 665 residues: ATPase WRNIP1 (665 aa).

The segment at 17–44 adopts a UBZ4-type zinc-finger fold; it reads QVQCPVCQQMMPAAHINSHLDRCLLLHP. Zn(2+) is bound by residues Cys-20, Cys-23, His-31, His-35, and Cys-39. The segment at 48 to 190 is disordered; it reads AEPAAGSHRA…DGEDDPGHWD (143 aa). 2 positions are modified to phosphoserine: Ser-65 and Ser-75. A compositionally biased stretch (polar residues) spans 76-89; that stretch reads ESSALKQPATPTAA. Lys-81 is covalently cross-linked (Glycyl lysine isopeptide (Lys-Gly) (interchain with G-Cter in ubiquitin)). Thr-85 carries the phosphothreonine modification. Phosphoserine occurs at positions 91 and 92. Residues 92–104 are compositionally biased toward acidic residues; it reads SEGEGEEGDDGGE. Thr-116 carries the post-translational modification Phosphothreonine. Positions 130–155 are enriched in low complexity; sequence RSSSPGRKGSGKRPAAAAAAGSASPR. Position 139 is a phosphoserine (Ser-139). Residue Lys-141 forms a Glycyl lysine isopeptide (Lys-Gly) (interchain with G-Cter in ubiquitin) linkage. At Ser-153 the chain carries Phosphoserine. Over residues 159–184 the composition is skewed to acidic residues; the sequence is EAEAQEEEEAVGDGDGDGDADADGED. A Glycyl lysine isopeptide (Lys-Gly) (interchain with G-Cter in ubiquitin) cross-link involves residue Lys-225. 270–276 provides a ligand contact to ATP; the sequence is PGCGKTT. Glycyl lysine isopeptide (Lys-Gly) (interchain with G-Cter in ubiquitin) cross-links involve residues Lys-301, Lys-310, Lys-316, Lys-322, and Lys-335. Lys-482 participates in a covalent cross-link: Glycyl lysine isopeptide (Lys-Gly) (interchain with G-Cter in SUMO2); alternate. Lys-482 is covalently cross-linked (Glycyl lysine isopeptide (Lys-Gly) (interchain with G-Cter in ubiquitin); alternate). A phosphotyrosine mark is found at Tyr-534 and Tyr-562. Lys-627 participates in a covalent cross-link: Glycyl lysine isopeptide (Lys-Gly) (interchain with G-Cter in ubiquitin). Residue Lys-633 forms a Glycyl lysine isopeptide (Lys-Gly) (interchain with G-Cter in ubiquitin); alternate linkage. The residue at position 633 (Lys-633) is an N6-acetyllysine; alternate. Lys-636 is covalently cross-linked (Glycyl lysine isopeptide (Lys-Gly) (interchain with G-Cter in ubiquitin)).

It belongs to the AAA ATPase family. RarA/MGS1/WRNIP1 subfamily. As to quaternary structure, forms homooligomers, possibly octamers. Directly interacts with POLD1, POLD2 and POLD4. Interacts with the N-terminal domain of WRN. Interacts (via UBZ4-type zinc finger) with monoubiquitin and polyubiquitin. Interacts with TRIM14 and PPP6C; these interactions positively regulate the RIGI signaling pathway. In terms of processing, sumoylated with SUMO1 and SUMO2/3. As to expression, ubiquitously expressed.

Its subcellular location is the nucleus. It is found in the cytoplasm. It catalyses the reaction ATP + H2O = ADP + phosphate + H(+). Functions as a modulator of initiation or reinitiation events during DNA polymerase delta-mediated DNA synthesis. In the presence of ATP, stimulation of DNA polymerase delta-mediated DNA synthesis is decreased. Also plays a role in the innate immune defense against viruses. Stabilizes the RIGI dsRNA interaction and promotes RIGI 'Lys-63'-linked polyubiquitination. In turn, RIGI transmits the signal through mitochondrial MAVS. This chain is ATPase WRNIP1, found in Homo sapiens (Human).